A 257-amino-acid chain; its full sequence is Phosphate import ATP-binding protein PstB (257 aa).

Residues 11–252 (IQVRDLNFYY…PAKKQTEDYI (242 aa)) form the ABC transporter domain. 43 to 50 (GPSGCGKS) is a binding site for ATP.

This sequence belongs to the ABC transporter superfamily. Phosphate importer (TC 3.A.1.7) family. In terms of assembly, the complex is composed of two ATP-binding proteins (PstB), two transmembrane proteins (PstC and PstA) and a solute-binding protein (PstS).

The protein localises to the cell inner membrane. The enzyme catalyses phosphate(out) + ATP + H2O = ADP + 2 phosphate(in) + H(+). In terms of biological role, part of the ABC transporter complex PstSACB involved in phosphate import. Responsible for energy coupling to the transport system. This chain is Phosphate import ATP-binding protein PstB, found in Salmonella paratyphi A (strain ATCC 9150 / SARB42).